The primary structure comprises 427 residues: UDP-N-acetyl-D-mannosamine dehydrogenase (427 aa).

Tyr-19, Ile-20, Asp-39, Arg-44, Thr-91, and Thr-130 together coordinate NAD(+). 8 residues coordinate UDP-N-acetyl-alpha-D-mannosaminouronate: Arg-155, Val-156, Lys-207, Asn-211, Arg-214, His-245, Arg-247, and Gly-258. Lys-207 acts as the Proton donor/acceptor in catalysis. Cys-261 acts as the Nucleophile in catalysis. 2 residues coordinate UDP-N-acetyl-alpha-D-mannosaminouronate: Tyr-318 and Lys-319. Arg-326 contributes to the NAD(+) binding site. Lys-404 contacts UDP-N-acetyl-alpha-D-mannosaminouronate.

It belongs to the UDP-glucose/GDP-mannose dehydrogenase family. As to quaternary structure, homotetramer; probably dimer of dimers.

The catalysed reaction is UDP-N-acetyl-alpha-D-mannosamine + 2 NAD(+) + H2O = UDP-N-acetyl-alpha-D-mannosaminouronate + 2 NADH + 3 H(+). Catalyzes the four-electron oxidation of UDP-N-acetyl-D-mannosamine (UDP-ManNAc), reducing NAD(+) and releasing UDP-N-acetylmannosaminuronic acid (UDP-ManNAcA). Cannot use NADP instead of NAD. The chain is UDP-N-acetyl-D-mannosamine dehydrogenase (wecC) from Methanococcus maripaludis (strain DSM 14266 / JCM 13030 / NBRC 101832 / S2 / LL).